Here is a 148-residue protein sequence, read N- to C-terminus: uncharacterized protein (148 aa).

The segment covering 37-94 has biased composition (low complexity); the sequence is NNNNYNNNNKNNNNNNNNNNNNNNNNNNNNNNNYINSCNSNNNNNNNNNNTKNNNINS. Residues 37 to 99 are disordered; sequence NNNNYNNNNK…NNINSRTDKN (63 aa).

This is an uncharacterized protein from Dictyostelium discoideum (Social amoeba).